Consider the following 92-residue polypeptide: Small ribosomal subunit protein bS20 (92 aa).

Residues 1–23 (MANTPSAKKRAKQAEKRRSHNAS) form a disordered region. Positions 7-20 (AKKRAKQAEKRRSH) are enriched in basic residues.

It belongs to the bacterial ribosomal protein bS20 family.

Binds directly to 16S ribosomal RNA. The sequence is that of Small ribosomal subunit protein bS20 from Pseudomonas savastanoi pv. phaseolicola (strain 1448A / Race 6) (Pseudomonas syringae pv. phaseolicola (strain 1448A / Race 6)).